The primary structure comprises 270 residues: uncharacterized protein (270 aa).

A compositionally biased stretch (basic and acidic residues) spans 22–31 (EAPQRTEASR). Residues 22 to 42 (EAPQRTEASRTHPSPFLALPG) are disordered.

This is an uncharacterized protein from Homo sapiens (Human).